A 474-amino-acid polypeptide reads, in one-letter code: Serine/threonine-protein kinase ksp1 (474 aa).

Residues 9-280 (YKVERPLNKG…EAVLAVTKWT (272 aa)) enclose the Protein kinase domain. Residues 15–23 (LNKGSYGTV) and Lys-43 contribute to the ATP site. Residue Asp-137 is the Proton acceptor of the active site. The interval 345–373 (VDENISTSSSPRSPASLAPVNNSERSYDS) is disordered. A compositionally biased stretch (low complexity) spans 350–363 (STSSSPRSPASLAP). 6 positions are modified to phosphoserine: Ser-353, Ser-354, Ser-357, Ser-378, Ser-404, and Ser-413.

The protein belongs to the protein kinase superfamily. Ser/Thr protein kinase family.

It localises to the cytoplasm. It is found in the nucleus. The catalysed reaction is L-seryl-[protein] + ATP = O-phospho-L-seryl-[protein] + ADP + H(+). It catalyses the reaction L-threonyl-[protein] + ATP = O-phospho-L-threonyl-[protein] + ADP + H(+). In Schizosaccharomyces pombe (strain 972 / ATCC 24843) (Fission yeast), this protein is Serine/threonine-protein kinase ksp1 (ksp1).